The following is a 930-amino-acid chain: MKLKDTLNLGKTEFPMRAGLPTKEPVWQKEWEDAKLYQRRQELNQGKPHFTLHDGPPYANGNIHVGHAMNKISKDIIVRSKSMSGFYAPFIPGWDTHGLPIEQVLSKQGVKRKEMDLVEYLKLCREYALSQVDKQREDFKRLGVSGDWENPYVTLTPDYEAAQIRVFGEMANKGYIYRGAKPVYWSWSSESALAEAEIEYHDLVSTSLYYANKVKDGKGVLDTDTYIVVWTTTPFTITASRGLTVGADIDYVLVQPAGEARKFVVAAELLTSLSEKFGWADVQVLETYRGQELNHIVTEHPWDTAVEELVILGDHVTTDSGTGIVHTAPGFGEDDYNVGIANNLEVAVTVDERGIMMKNAGPEFEGQFYEKVVPTVIEKLGNLLLAQEEISHSYPFDWRTKKPIIWRAVPQWFASVSKFRQEILDEIEKVKFHSEWGKVRLYNMIRDRGDWVISRQRAWGVPLPIFYAEDGTAIMVAETIEHVAQLFEEHGSSIWWERDAKDLLPEGFTHPGSPNGEFKKETDIMDVWFDSGSSWNGVVVNRPELTYPADLYLEGSDQYRGWFNSSLITSVANHGVAPYKQILSQGFALDGKGEKMSKSLGNTIAPSDVEKQFGAEILRLWVTSVDSSNDVRISMDILSQVSETYRKIRNTLRFLIANTSDFNPAQDTVAYDELRSVDKYMTIRFNQLVKTIRDAYADFEFLTIYKALVNFINVDLSAFYLDFAKDVVYIEGAKSLERRQMQTVFYDILVKITKLLTPILPHTAEEIWSYLEFETEDFVQLSELPEVQTFANQEEILDTWAAFMDFRGQAQKALEEARNAKVIGKSLEAHLTVYPNEVVKTLLEAVNSNVAQLLIVSELTIAEGPAPEAALSFEDVAFTVERAAGEVCDRCRRIDPTTAERSYQAVICDHCASIVEENFAEAVAEGFEEK.

Positions 57-67 match the 'HIGH' region motif; that stretch reads PYANGNIHVGH. E554 is a binding site for L-isoleucyl-5'-AMP. Residues 595–599 carry the 'KMSKS' region motif; it reads KMSKS. An ATP-binding site is contributed by K598. 4 residues coordinate Zn(2+): C888, C891, C908, and C911.

The protein belongs to the class-I aminoacyl-tRNA synthetase family. IleS type 1 subfamily. Monomer. It depends on Zn(2+) as a cofactor.

Its subcellular location is the cytoplasm. The catalysed reaction is tRNA(Ile) + L-isoleucine + ATP = L-isoleucyl-tRNA(Ile) + AMP + diphosphate. Its function is as follows. Catalyzes the attachment of isoleucine to tRNA(Ile). As IleRS can inadvertently accommodate and process structurally similar amino acids such as valine, to avoid such errors it has two additional distinct tRNA(Ile)-dependent editing activities. One activity is designated as 'pretransfer' editing and involves the hydrolysis of activated Val-AMP. The other activity is designated 'posttransfer' editing and involves deacylation of mischarged Val-tRNA(Ile). In Streptococcus pneumoniae (strain JJA), this protein is Isoleucine--tRNA ligase.